The chain runs to 392 residues: Serine protease ea (392 aa).

The first 19 residues, 1–19, serve as a signal peptide directing secretion; it reads MLKPSIICLFLGILAKSSA. Residues 20–127 constitute a propeptide, activation peptide; sequence GQFYFPNEAA…GQCGNILSNR (108 aa). In terms of domain architecture, Clip spans 36 to 89; it reads RCITPNRERALCIHLEDCKYLYGLLTTTPLRDTDRLYLSRSQCGYTNGKVLICC. 3 disulfides stabilise this stretch: cysteine 37–cysteine 88, cysteine 47–cysteine 78, and cysteine 53–cysteine 89. Asparagine 107 is a glycosylation site (N-linked (GlcNAc...) asparagine). 5 disulfides stabilise this stretch: cysteine 120-cysteine 260, cysteine 158-cysteine 174, cysteine 202-cysteine 212, cysteine 307-cysteine 324, and cysteine 334-cysteine 367. Residues 128–391 enclose the Peptidase S1 domain; sequence IYGGMKTKID…YVDWIQNTIE (264 aa). Histidine 173 serves as the catalytic Charge relay system. 4 residues coordinate Ca(2+): glutamate 193, aspartate 195, threonine 198, and aspartate 201. Aspartate 240 acts as the Charge relay system in catalysis. The active-site Charge relay system is the serine 338.

It belongs to the peptidase S1 family. CLIP subfamily. As to quaternary structure, interacts with Spn27A; the two proteins are covalently linked leading to inhibition of ea catalytic activity. Interacts (via Peptidase domain) with snk (via N-terminal prodomain); leads to proteolytic activation of ea by snk. Sulfation of a vitelline membrane component by pip is required for proteolytic cleavage of ea by snk but not for the interaction of ea with snk. Post-translationally, proteolytically cleaved by snk. Activation peptide and active catalytic domain remain associated by a disulfide bond. Processed ea/easter is present in extremely low amounts in the early embryo as it is rapidly converted into a high molecular mass complex made up of ea covalently bound to the serpin Spn27A. Zymogen activation is also controlled by a negative feedback loop from Dorsal.

It localises to the secreted. Its activity is regulated as follows. Activated proteolytically by snk; activation requires both activation of the ndl-gd-snk protease cascade and sulfation of a vitelline membrane component by pip. Inhibited by binding of the serpin Spn27A. In terms of biological role, component of the extracellular signaling pathway that establishes the dorsal-ventral pathway of the embryo. A protease cascade involving ndl, gd, snk and ea results in activation of the spz Toll receptor ligand; acts downstream of ndl, gd and snk and is required for proteolytic processing of spz. Activation of ea requires both activation of the ndl-gd-snk protease cascade and sulfation of a vitelline membrane component by pip. Localized activation of the Toll receptor in the ventral region of the embryo defines cell identities along the dorsal-ventral continuum. This Drosophila melanogaster (Fruit fly) protein is Serine protease ea.